Reading from the N-terminus, the 101-residue chain is Small ribosomal subunit protein uS14 (101 aa).

It belongs to the universal ribosomal protein uS14 family. As to quaternary structure, part of the 30S ribosomal subunit. Contacts proteins S3 and S10.

Its function is as follows. Binds 16S rRNA, required for the assembly of 30S particles and may also be responsible for determining the conformation of the 16S rRNA at the A site. This Blochmanniella floridana protein is Small ribosomal subunit protein uS14.